Reading from the N-terminus, the 890-residue chain is Alanine--tRNA ligase (890 aa).

Zn(2+) contacts are provided by His568, His572, Cys680, and His684.

The protein belongs to the class-II aminoacyl-tRNA synthetase family. It depends on Zn(2+) as a cofactor.

It is found in the cytoplasm. The catalysed reaction is tRNA(Ala) + L-alanine + ATP = L-alanyl-tRNA(Ala) + AMP + diphosphate. Functionally, catalyzes the attachment of alanine to tRNA(Ala) in a two-step reaction: alanine is first activated by ATP to form Ala-AMP and then transferred to the acceptor end of tRNA(Ala). Also edits incorrectly charged Ser-tRNA(Ala) and Gly-tRNA(Ala) via its editing domain. The sequence is that of Alanine--tRNA ligase from Psychrobacter arcticus (strain DSM 17307 / VKM B-2377 / 273-4).